Here is a 254-residue protein sequence, read N- to C-terminus: Probable electron transfer flavoprotein subunit beta (254 aa).

This sequence belongs to the ETF beta-subunit/FixA family. In terms of assembly, heterodimer of an alpha and a beta subunit. The cofactor is FAD. AMP is required as a cofactor.

Its subcellular location is the mitochondrion matrix. Functionally, the electron transfer flavoprotein serves as a specific electron acceptor for several dehydrogenases, including five acyl-CoA dehydrogenases, glutaryl-CoA and sarcosine dehydrogenase. It transfers the electrons to the main mitochondrial respiratory chain via ETF-ubiquinone oxidoreductase (ETF dehydrogenase). The sequence is that of Probable electron transfer flavoprotein subunit beta from Schizosaccharomyces pombe (strain 972 / ATCC 24843) (Fission yeast).